Consider the following 547-residue polypeptide: Cytochrome P450 monooxygenase fsoD (547 aa).

Residues 3 to 23 (DITLAAVSIGLFFYVGARAVL) form a helical membrane-spanning segment. Residue C490 coordinates heme.

This sequence belongs to the cytochrome P450 family. The cofactor is heme.

It localises to the membrane. The catalysed reaction is isomotiol + reduced [NADPH--hemoprotein reductase] + O2 = 2alpha-hydroxyisomotiol + oxidized [NADPH--hemoprotein reductase] + H2O + H(+). It functions in the pathway secondary metabolite biosynthesis; terpenoid biosynthesis. In terms of biological role, cytochrome P450 monooxygenase; part of the gene cluster that mediates the biosynthesis of the enfumafungin-type antibiotic, fuscoatroside. Within the pathway, fsoD catalyzes the hydroxylation at position C2 of isomotiol to produce 2-alpha-hydroxy-isomotiol. FsoD may also hydroxylate the intermediates 3-O-(beta-D-glucopyranosyl)-isomotiol and 2-deacetoxy-fuscoatroside at the same position C2. The fuscoatroside biosynthesis is initiated by the cyclization of 2,3(S)-oxidosqualene through FsoA's terpene cyclase (TC) domain, leading to the formation of the fernane skeleton isomotiol, harboring a fernane triterpene skeleton with a C8-C9 double bond. Subsequently, C2-alpha-hydroxylation mediated by fsoD results in the production of 2-alpha-hydroxy-isomotiol, which is further acetylated by fsoF. The glycosyltransferase (GT) domain of FsoA may convert isomotiol, 2-alpha-hydroxy-isomotiol, and the acetylated derivative of 2-alpha-hydroxy-isomotiol into their corresponding glycosides 3-O-(beta-D-glucopyranosyl)-isomotiol, 3-O-(beta-D-glucopyranosyl)-2-alpha-hydroxy-isomotiol, and 3-O-(beta-D-glucopyranosyl)-2-alpha-acetoxy-isomotiol, which then undergo oxidative cleavage under the action of fsoE to form s 2-deacetoxy-fuscoatroside, 2-deacetyl-fuscoatroside, and fuscoatroside, respectively. Although hydroxylation followed by acetylation of 3-O-(beta-D-glucopyranosyl)-isomotiol and 2-deacetoxy-fuscoatroside by fsoD and fsoF could not be ruled out, this process is likely to occur with difficulty due to bulky steric hindrance caused by the presence of a glycan at C3 in these compounds. Interestingly, fsoE can also utilize the aglycones isomotiol and 2-alpha-hydroxy-isomotiol as substrates to generate 19-beta-hydroxy-isomotiol and 2-alpha,19-beta-dihydroxy-isomotiol, respectively. These reactions occur with lower efficiency. Finally, fsoE can further convert 2-alpha,19-beta-dihydroxy-isomotiol into 2-alpha-hydroxy-ismotiol-19-one and 2-alpha-hydroxy-ismotiol-19-one into 2-deacetyl-3-deglucopyranosyl-fuscoatroside. The protein is Cytochrome P450 monooxygenase fsoD of Humicola fuscoatra.